An 812-amino-acid chain; its full sequence is ATP-dependent DNA helicase PIF3 (812 aa).

Position 247–254 (247–254 (GSAGTGKT)) interacts with ATP. Residues 741–761 (HLVYVACSRVRSMDQLIVRNV) mediate DNA binding.

It belongs to the helicase family. PIF1 subfamily. As to quaternary structure, monomer. It depends on Mg(2+) as a cofactor.

The protein localises to the cytoplasm. It catalyses the reaction Couples ATP hydrolysis with the unwinding of duplex DNA at the replication fork by translocating in the 5'-3' direction. This creates two antiparallel DNA single strands (ssDNA). The leading ssDNA polymer is the template for DNA polymerase III holoenzyme which synthesizes a continuous strand.. It carries out the reaction ATP + H2O = ADP + phosphate + H(+). Its function is as follows. DNA-dependent ATPase and 5'-3' DNA helicase required for the maintenance of genome stability. The protein is ATP-dependent DNA helicase PIF3 of Trypanosoma brucei brucei (strain 927/4 GUTat10.1).